The following is a 573-amino-acid chain: Urease subunit alpha (573 aa).

The Urease domain maps to glycine 136–phenylalanine 573. Residues histidine 141, histidine 143, and lysine 224 each coordinate Ni(2+). N6-carboxylysine is present on lysine 224. Histidine 226 lines the substrate pocket. Residues histidine 253 and histidine 279 each contribute to the Ni(2+) site. Histidine 327 acts as the Proton donor in catalysis. Aspartate 367 lines the Ni(2+) pocket.

It belongs to the metallo-dependent hydrolases superfamily. Urease alpha subunit family. In terms of assembly, heterotrimer of UreA (gamma), UreB (beta) and UreC (alpha) subunits. Three heterotrimers associate to form the active enzyme. Ni cation serves as cofactor. In terms of processing, carboxylation allows a single lysine to coordinate two nickel ions.

Its subcellular location is the cytoplasm. It carries out the reaction urea + 2 H2O + H(+) = hydrogencarbonate + 2 NH4(+). It functions in the pathway nitrogen metabolism; urea degradation; CO(2) and NH(3) from urea (urease route): step 1/1. The polypeptide is Urease subunit alpha (Rhodococcus opacus (strain B4)).